We begin with the raw amino-acid sequence, 468 residues long: Argininosuccinate lyase (468 aa).

Belongs to the lyase 1 family. Argininosuccinate lyase subfamily.

Its subcellular location is the cytoplasm. The enzyme catalyses 2-(N(omega)-L-arginino)succinate = fumarate + L-arginine. The protein operates within amino-acid biosynthesis; L-arginine biosynthesis; L-arginine from L-ornithine and carbamoyl phosphate: step 3/3. The protein is Argininosuccinate lyase of Hahella chejuensis (strain KCTC 2396).